The following is a 102-amino-acid chain: Lipopolysaccharide assembly protein A (102 aa).

The Cytoplasmic segment spans residues 1–2 (MK). A helical membrane pass occupies residues 3–23 (YLLIFLLVLAIFVISVTLGAQ). At 24–43 (NDQQVTFNYLLAQGEYRIST) the chain is on the periplasmic side. Residues 44-64 (LLAVLFAAGFAIGWLICGLFW) traverse the membrane as a helical segment. Residues 64–92 (WLRVRVSLARAERKIKRLENQLSPATDVA) are a coiled coil. The Cytoplasmic segment spans residues 65 to 102 (LRVRVSLARAERKIKRLENQLSPATDVAVVPHSSAAKE).

Belongs to the LapA family.

The protein localises to the cell inner membrane. In terms of biological role, involved in the assembly of lipopolysaccharide (LPS). This Escherichia coli (strain K12) protein is Lipopolysaccharide assembly protein A.